The chain runs to 217 residues: Probable D-methionine transport system permease protein MetI (217 aa).

The 195-residue stretch at 13–207 (TLETLYMGFI…LIVMLSQKLG (195 aa)) folds into the ABC transmembrane type-1 domain. The next 5 membrane-spanning stretches (helical) occupy residues 20 to 40 (GFIA…LAFL), 58 to 78 (VIIN…LLPF), 81 to 101 (LVVG…VSAI), 143 to 163 (IPIL…YSAM), and 184 to 204 (NMIY…MLSQ).

It belongs to the binding-protein-dependent transport system permease family. CysTW subfamily.

The protein localises to the cell inner membrane. In terms of biological role, part of the binding-protein-dependent transport system for D-methionine. Probably responsible for the translocation of the substrate across the membrane. This Pasteurella multocida (strain Pm70) protein is Probable D-methionine transport system permease protein MetI (metI).